A 1215-amino-acid polypeptide reads, in one-letter code: Kinesin-like protein KIN-7I (1215 aa).

The Kinesin motor domain maps to 3-327; it reads RIHVAVRARP…LQFASRALRV (325 aa). 79-86 contributes to the ATP binding site; the sequence is GQTNSGKT. Coiled coils occupy residues 333-414, 571-646, 708-855, and 894-979; these read VNEI…IENL, ESEA…AAYE, IRDY…KRDS, and DMEA…KEDM.

The protein belongs to the TRAFAC class myosin-kinesin ATPase superfamily. Kinesin family. KIN-7 subfamily.

The chain is Kinesin-like protein KIN-7I from Oryza sativa subsp. japonica (Rice).